The primary structure comprises 488 residues: L-arabinose isomerase 1 (488 aa).

4 residues coordinate Mn(2+): Glu-306, Glu-331, His-348, and His-447.

It belongs to the arabinose isomerase family. The cofactor is Mn(2+).

It catalyses the reaction beta-L-arabinopyranose = L-ribulose. Its pathway is carbohydrate degradation; L-arabinose degradation via L-ribulose; D-xylulose 5-phosphate from L-arabinose (bacterial route): step 1/3. Functionally, catalyzes the conversion of L-arabinose to L-ribulose. This is L-arabinose isomerase 1 from Clostridium acetobutylicum (strain ATCC 824 / DSM 792 / JCM 1419 / IAM 19013 / LMG 5710 / NBRC 13948 / NRRL B-527 / VKM B-1787 / 2291 / W).